The primary structure comprises 746 residues: Histone-lysine N-methyltransferase EZH2 (746 aa).

The segment at 1 to 340 is interaction with DNMT1, DNMT3A and DNMT3B; it reads MGQTGKKSEK…AKEFAAALTA (340 aa). A Phosphoserine; by PKB/AKT1 modification is found at serine 21. Residues 39-68 form an interaction with EED region; it reads KSMFSSNRQKILERTEILNQEWKQRRIQPV. Residue serine 75 is glycosylated (O-linked (GlcNAc) serine). Residue serine 76 is modified to Phosphoserine. Positions 180–222 are disordered; sequence QYNDDDDDDDGDDPEEREEKQKDLEDHRDDKESRPPRKFPSDK. The segment covering 182–195 has biased composition (acidic residues); sequence NDDDDDDDGDDPEE. Residues 196–222 show a composition bias toward basic and acidic residues; that stretch reads REEKQKDLEDHRDDKESRPPRKFPSDK. Residues 329 to 522 are interaction with CDYL; sequence EGAKEFAAAL…SSNHVYNYQP (194 aa). The residue at position 339 (threonine 339) is a Phosphothreonine. A disordered region spans residues 340 to 426; the sequence is AERIKTPPKR…PIKMKPNIEP (87 aa). Threonine 345 is modified (phosphothreonine; by CDK1 and CDK2). The segment covering 345–357 has biased composition (basic residues); the sequence is TPPKRPGGRRRGR. Serine 363 and serine 366 each carry phosphoserine. At threonine 367 the chain carries Phosphothreonine. Positions 374–385 are enriched in basic and acidic residues; it reads ESKDTDSDREAG. A Phosphothreonine modification is found at threonine 487. Residues 503-605 form the CXC domain; it reads CRKIQLKKDG…SKNVSCKNCS (103 aa). An SET domain is found at 612–727; it reads KHLLLAPSDV…TGEELFFDYR (116 aa). Residue lysine 634 forms a Glycyl lysine isopeptide (Lys-Gly) (interchain with G-Cter in SUMO2) linkage.

It belongs to the class V-like SAM-binding methyltransferase superfamily. Histone-lysine methyltransferase family. EZ subfamily. In terms of assembly, component of the PRC2/EED-EZH2 complex, which includes EED, EZH2, SUZ12, RBBP4 and RBBP7 and possibly AEBP2. The minimum components required for methyltransferase activity of the PRC2/EED-EZH2 complex are EED, EZH2 and SUZ12. The PRC2 complex may also interact with DNMT1, DNMT3A, DNMT3B and PHF1 via the EZH2 subunit and with SIRT1 via the SUZ12 subunit. Interacts with HDAC1 and HDAC2. Binds ATRX via the SET domain. Interacts with PRAME. Interacts with CDYL. Interacts with BMAL1, CLOCK and CRY1. Interacts with DNMT3L; the interaction is direct. Interacts with EZHIP; the interaction blocks EZH2 methyltransferase activity. Interacts with ZNF263; recruited to the SIX3 promoter along with other proteins involved in chromatin modification and transcriptional corepression where it contributes to transcriptional repression. Interacts with ARMC12. Interacts with ZMYND8; the interaction is dependent on the presence of chromatin. Interacts with DDX18; this interaction inhibits the PRC2 complex. Phosphorylated by AKT1. Phosphorylation by AKT1 reduces methyltransferase activity. Phosphorylation at Thr-345 by CDK1 and CDK2 promotes maintenance of H3K27me3 levels at EZH2-target loci, thus leading to epigenetic gene silencing. Post-translationally, sumoylated. In terms of processing, glycosylated: O-GlcNAcylation at Ser-75 by OGT increases stability of EZH2 and facilitates the formation of H3K27me3 by the PRC2/EED-EZH2 complex.

It is found in the nucleus. It carries out the reaction L-lysyl(27)-[histone H3] + 3 S-adenosyl-L-methionine = N(6),N(6),N(6)-trimethyl-L-lysyl(27)-[histone H3] + 3 S-adenosyl-L-homocysteine + 3 H(+). In terms of biological role, polycomb group (PcG) protein. Catalytic subunit of the PRC2/EED-EZH2 complex, which methylates 'Lys-9' (H3K9me) and 'Lys-27' (H3K27me) of histone H3, leading to transcriptional repression of the affected target gene. Able to mono-, di- and trimethylate 'Lys-27' of histone H3 to form H3K27me1, H3K27me2 and H3K27me3, respectively. Displays a preference for substrates with less methylation, loses activity when progressively more methyl groups are incorporated into H3K27, H3K27me0 &gt; H3K27me1 &gt; H3K27me2. Compared to EZH1-containing complexes, it is more abundant in embryonic stem cells and plays a major role in forming H3K27me3, which is required for embryonic stem cell identity and proper differentiation. The PRC2/EED-EZH2 complex may also serve as a recruiting platform for DNA methyltransferases, thereby linking two epigenetic repression systems. EZH2 can also methylate non-histone proteins such as the transcription factor GATA4 and the nuclear receptor RORA. Regulates the circadian clock via histone methylation at the promoter of the circadian genes. Essential for the CRY1/2-mediated repression of the CLOCK-BMAL1 transcriptional activation of PER1/2. Involved in the di and trimethylation of 'Lys-27' of histone H3 on PER1/2 promoters which is necessary for the CRY1/2 proteins to inhibit transcription. The chain is Histone-lysine N-methyltransferase EZH2 (EZH2) from Macaca fascicularis (Crab-eating macaque).